Here is a 144-residue protein sequence, read N- to C-terminus: uncharacterized protein (144 aa).

A helical transmembrane segment spans residues 72–90 (VAIGTSLIVGAGVAMEVSV).

To yeast YCL21w.

It is found in the membrane. This is an uncharacterized protein from Saccharomyces cerevisiae (strain ATCC 204508 / S288c) (Baker's yeast).